Here is a 768-residue protein sequence, read N- to C-terminus: Cullin-3 (768 aa).

Ser-2 bears the N-acetylserine mark. Positions 2-41 are interaction with KLHL18; it reads SNLSKGTGSRKDTKMRIRAFPMTMDEKYVNSIWDLLKNAI. Ser-585 is modified (phosphoserine). A disordered region spans residues 677–698; sequence VAAKQGESDPERKETRQKVDDD. Residues 682–698 show a composition bias toward basic and acidic residues; it reads GESDPERKETRQKVDDD. The Cullin neddylation domain occupies 698 to 760; it reads DRKHEIEAAI…REYLARTPED (63 aa). Residue Lys-712 forms a Glycyl lysine isopeptide (Lys-Gly) (interchain with G-Cter in NEDD8) linkage.

This sequence belongs to the cullin family. As to quaternary structure, forms neddylation-dependent homodimers. Component of multiple BCR (BTB-CUL3-RBX1) E3 ubiquitin-protein ligase complexes formed of CUL3, RBX1 and a variable BTB domain-containing protein acting as both, adapter to cullin and substrate recognition subunit. The BCR complex may be active as a heterodimeric complex, in which NEDD8, covalently attached to one CUL3 molecule, binds to the C-terminus of a second CUL3 molecule. Interacts with RBX1, RNF7, CYCE and TIP120A/CAND1. Part of the BCR(SPOP) containing SPOP, and of BCR containing homodimeric SPOPL or the heterodimer formed by SPOP and SPOPL. Part of the probable BCR(KLHL9-KLHL13) complex with BTB domain proteins KLHL9 and KLHL13. Part of the BCR(KLHL41) complex containing KLHL41. Component of the BCR(KLHL12) E3 ubiquitin ligase complex, at least composed of CUL3 and KLHL12 and RBX1. Component of the BCR(KLHL3) E3 ubiquitin ligase complex, at least composed of CUL3 and KLHL3 and RBX1. Part of the BCR(ENC1) complex containing ENC1. Part of a complex consisting of BMI1/PCGF4, CUL3 and SPOP. Part of a complex consisting of BRMS1, CUL3 and SPOP. Component of the BCR(KLHL21) E3 ubiquitin ligase complex, at least composed of CUL3, KLHL21 and RBX1. Component of the BCR(KLHL22) E3 ubiquitin ligase complex, at least composed of CUL3, KLHL22 and RBX1. Component of the BCR(KLHL25) E3 ubiquitin ligase complex, at least composed of CUL3, KLHL25 and RBX1. Part of a complex consisting of MACROH2A1, CUL3 and SPOP. Component of the BCR(KLHL42) E3 ubiquitin ligase complex, at least composed of CUL3 and KLHL42. Component of the BCR(KBTBD8) E3 ubiquitin ligase complex, at least composed of CUL3, KBTBD8 and RBX1. Interacts with KLHL42 (via the BTB domain). Interacts with KATNA1; the interaction is enhanced by KLHL42. Interacts with KCTD5, KLHL9, KLHL11, KLHL13, GAN, ZBTB16, KLHL3, KLHL15, KLHL20, KLHL36, GMCL2, BTBD1. Part of a complex that contains CUL3, RBX1 and GAN. Interacts (via BTB domain) with KLHL17; the interaction regulates surface GRIK2 expression. Interacts with KCTD7. Part of the BCR(GAN) complex containing GAN. Part of the BCR(KEAP1) complex containing KEAP1. vInteracts with KLHL10. Interacts with KAT5 and ATF2. Interacts with KCTD17 in the BCR(KCTD17) E3 ubiquitin ligase complex, at least composed of CUL3, KCTD17 and RBX1. Interacts (when neddylated) with ARIH1; leading to activate the E3 ligase activity of ARIH1. Interacts with COPS9. Interacts with PPP2R5B; this interaction is indirect and mediated through KLHL15-binding and leads to PPP2R5B proteasomal degradation. Interacts with RBBP8/CtIP; this interaction is indirect and mediated through KLHL15-binding and leads to RBBP8 proteasomal degradation. Interacts with KLHL24 in the BCR(KLHL24) E3 ubiquitin ligase complex, composed of CUL3, RBX1 and KLHL24. Interacts with RHOBTB2. Interacts (via BTB domain) with KLHL17; the interaction regulates surface GRIK2 expression. Interacts with AURKA and KLHL18 (via BTB domain). Interacts (unneddylated form) with DCUN1D1, DCUN1D2, DCUN1D3, DCUN1D4 and DCUN1D5; these interactions promote the cullin neddylation. Component of a BCR3 (BTB-CUL3-RBX1) E3 ubiquitin ligase complex, also named Cul3-RING ubiquitin ligase complex CUL3(KBTBD6/7), composed of CUL3, RBX1, KBTBD6 and KBTBD7. Component of the BCR(KBTBD2) E3 ubiquitin ligase complex, at least composed of CUL3, KBTBD2 and RBX1. Interacts with KBTBD2 (via the BTB domain). Component of the BCR(KBTBD4) E3 ubiquitin ligase complex, at least composed of CUL3, KBTBD4 and RBX1. Neddylated. Attachment of NEDD8 is required for the E3 ubiquitin-protein ligase activity of the BCR complex. Deneddylated via its interaction with the COP9 signalosome (CSN) complex.

The protein resides in the nucleus. It is found in the golgi apparatus. The protein localises to the cell projection. It localises to the cilium. Its subcellular location is the flagellum. The protein resides in the cytoplasm. It is found in the cytoskeleton. The protein localises to the spindle. It localises to the microtubule organizing center. Its subcellular location is the centrosome. The protein resides in the spindle pole. The protein operates within protein modification; protein ubiquitination. Functionally, core component of multiple cullin-RING-based BCR (BTB-CUL3-RBX1) E3 ubiquitin-protein ligase complexes which mediate the ubiquitination and subsequent proteasomal degradation of target proteins. BCR complexes and ARIH1 collaborate in tandem to mediate ubiquitination of target proteins. As a scaffold protein may contribute to catalysis through positioning of the substrate and the ubiquitin-conjugating enzyme. The E3 ubiquitin-protein ligase activity of the complex is dependent on the neddylation of the cullin subunit and is inhibited by the association of the deneddylated cullin subunit with TIP120A/CAND1. The functional specificity of the BCR complex depends on the BTB domain-containing protein as the substrate recognition component. BCR(KLHL42) is involved in ubiquitination of KATNA1. BCR(SPOP) is involved in ubiquitination of BMI1/PCGF4, BRMS1, MACROH2A1 and DAXX, GLI2 and GLI3. Can also form a cullin-RING-based BCR (BTB-CUL3-RBX1) E3 ubiquitin-protein ligase complex containing homodimeric SPOPL or the heterodimer formed by SPOP and SPOPL; these complexes have lower ubiquitin ligase activity. BCR(KLHL9-KLHL13) controls the dynamic behavior of AURKB on mitotic chromosomes and thereby coordinates faithful mitotic progression and completion of cytokinesis. BCR(KLHL12) is involved in ER-Golgi transport by regulating the size of COPII coats, thereby playing a key role in collagen export, which is required for embryonic stem (ES) cells division: BCR(KLHL12) acts by mediating monoubiquitination of SEC31 (SEC31A or SEC31B). BCR(KLHL3) acts as a regulator of ion transport in the distal nephron; by mediating ubiquitination of WNK4. The BCR(KLHL20) E3 ubiquitin ligase complex is involved in interferon response and anterograde Golgi to endosome transport: it mediates both ubiquitination leading to degradation and 'Lys-33'-linked ubiquitination. The BCR(KLHL21) E3 ubiquitin ligase complex regulates localization of the chromosomal passenger complex (CPC) from chromosomes to the spindle midzone in anaphase and mediates the ubiquitination of AURKB. The BCR(KLHL22) ubiquitin ligase complex mediates monoubiquitination of PLK1, leading to PLK1 dissociation from phosphoreceptor proteins and subsequent removal from kinetochores, allowing silencing of the spindle assembly checkpoint (SAC) and chromosome segregation. The BCR(KLHL22) ubiquitin ligase complex is also responsible for the amino acid-stimulated 'Lys-48' polyubiquitination and proteasomal degradation of DEPDC5. Through the degradation of DEPDC5, releases the GATOR1 complex-mediated inhibition of the TORC1 pathway. The BCR(KLHL25) ubiquitin ligase complex is involved in translational homeostasis by mediating ubiquitination and subsequent degradation of hypophosphorylated EIF4EBP1 (4E-BP1). The BCR(KLHL25) ubiquitin ligase complex is also involved in lipid synthesis by mediating ubiquitination and degradation of ACLY. The BCR(KBTBD8) complex acts by mediating monoubiquitination of NOLC1 and TCOF1, leading to remodel the translational program of differentiating cells in favor of neural crest specification. Involved in ubiquitination of cyclin E and of cyclin D1 (in vitro) thus involved in regulation of G1/S transition. Involved in the ubiquitination of KEAP1, ENC1 and KLHL41. In concert with ATF2 and RBX1, promotes degradation of KAT5 thereby attenuating its ability to acetylate and activate ATM. The BCR(KCTD17) E3 ubiquitin ligase complex mediates ubiquitination and degradation of TCHP, a down-regulator of cilium assembly, thereby inducing ciliogenesis. The BCR(KLHL24) E3 ubiquitin ligase complex mediates ubiquitination of KRT14, controls KRT14 levels during keratinocytes differentiation, and is essential for skin integrity. The BCR(KLHL18) E3 ubiquitin ligase complex mediates the ubiquitination of AURKA leading to its activation at the centrosome which is required for initiating mitotic entry. The BCR(KEAP1) E3 ubiquitin ligase complex acts as a key sensor of oxidative and electrophilic stress by mediating ubiquitination and degradation of NFE2L2/NRF2, a transcription factor regulating expression of many cytoprotective genes. As part of the CUL3(KBTBD6/7) E3 ubiquitin ligase complex functions mediates 'Lys-48' ubiquitination and proteasomal degradation of TIAM1. By controlling the ubiquitination of that RAC1 guanine exchange factors (GEF), regulates RAC1 signal transduction and downstream biological processes including the organization of the cytoskeleton, cell migration and cell proliferation. The BCR(KBTBD4) E3 ubiquitin ligase complex targets CoREST corepressor complex components RCOR1, KDM1A/LSD1 and HDAC2 for proteasomal degradation with RCOR1 likely to be the primary target while degradation of KDM1A and HDAC2 is likely due to their association with RCOR1. It also targets RCOR3, MIER2 and MIER3 for proteasomal degradation as well as associated proteins ZNF217 and RREB1 with degradation being dependent on the presence of an ELM2 domain in the target proteins. The BCR(ARMC5) complex mediates premature transcription termination of transcripts that are unfavorably configured for transcriptional elongation by mediating ubiquitination of Pol II subunit POLR2A. Required for 'Lys-63'-linked ubiquitination of large ribosomal subunit protein MRPL12. This Rattus norvegicus (Rat) protein is Cullin-3 (Cul3).